A 137-amino-acid chain; its full sequence is 2-iminobutanoate/2-iminopropanoate deaminase (137 aa).

An N-acetylserine modification is found at S2. 2 positions are modified to N6-succinyllysine: K13 and K67. The residue at position 74 (T74) is a Phosphothreonine. S136 carries the phosphoserine modification.

It belongs to the RutC family. In terms of assembly, homotrimer. Interacts with YTHDF2.

It is found in the cytoplasm. The protein resides in the nucleus. Its subcellular location is the peroxisome. The protein localises to the mitochondrion. The catalysed reaction is 2-iminobutanoate + H2O = 2-oxobutanoate + NH4(+). The enzyme catalyses 2-iminopropanoate + H2O = pyruvate + NH4(+). Its function is as follows. Catalyzes the hydrolytic deamination of enamine/imine intermediates that form during the course of normal metabolism. May facilitate the release of ammonia from these potentially toxic reactive metabolites, reducing their impact on cellular components. It may act on enamine/imine intermediates formed by several types of pyridoxal-5'-phosphate-dependent dehydratases including L-threonine dehydratase. In terms of biological role, also promotes endoribonucleolytic cleavage of some transcripts by promoting recruitment of the ribonuclease P/MRP complex. Acts by bridging YTHDF2 and the ribonuclease P/MRP complex. RIDA/HRSP12 binds to N6-methyladenosine (m6A)-containing mRNAs containing a 5'-GGUUC-3' motif: cooperative binding of RIDA/HRSP12 and YTHDF2 to such transcripts lead to recruitment of the ribonuclease P/MRP complex and subsequent endoribonucleolytic cleavage. In Bos taurus (Bovine), this protein is 2-iminobutanoate/2-iminopropanoate deaminase.